A 267-amino-acid chain; its full sequence is Cytokinesis defective protein 7 (267 aa).

The segment at 244 to 267 is disordered; sequence RNQADQSILPPSGDQQHHRSELHA. Residues 258 to 267 are compositionally biased toward basic and acidic residues; that stretch reads QQHHRSELHA.

The sequence is that of Cytokinesis defective protein 7 from Caenorhabditis elegans.